Consider the following 117-residue polypeptide: Ig heavy chain V region 23 (117 aa).

Residues 1-19 form the signal peptide; the sequence is MGWSCIILFLVAAANGVHS. The interval 20–49 is framework-1; sequence QVQLQQPGTELVKPGASVKLSCKASGYTFT. Cysteine 41 and cysteine 115 are joined by a disulfide. Positions 50-54 are complementarity-determining-1; sequence SYWMH. A framework-2 region spans residues 55–68; it reads WVKQRPGQGLEWIG. The interval 69–85 is complementarity-determining-2; that stretch reads NINPGNGGTNYNEKFKS. The tract at residues 86-117 is framework-3; that stretch reads KVTLTVDKSSSTAYTQLSSLTSEDSAVYYCAR.

This chain is Ig heavy chain V region 23, found in Mus musculus (Mouse).